The following is a 56-amino-acid chain: Small ribosomal subunit protein uS14 (56 aa).

Positions 21, 24, 39, and 42 each coordinate Zn(2+).

It belongs to the universal ribosomal protein uS14 family. Zinc-binding uS14 subfamily. Part of the 30S ribosomal subunit. Zn(2+) is required as a cofactor.

In terms of biological role, binds 16S rRNA, required for the assembly of 30S particles. This is Small ribosomal subunit protein uS14 from Pyrococcus abyssi (strain GE5 / Orsay).